The chain runs to 434 residues: Prenyltransferase penG (434 aa).

Composition is skewed to polar residues over residues 1-14 (MTQD…QTAG) and 21-35 (THSN…PSTW). Residues 1 to 35 (MTQDVVTVSSQTAGTIKESGTHSNPDNKTTSPSTW) form a disordered region. L-tryptophan-binding positions include 104–105 (EI) and glutamate 108. Substrate-binding residues include arginine 122, lysine 208, arginine 275, lysine 277, tyrosine 279, and tyrosine 348.

The protein belongs to the tryptophan dimethylallyltransferase family.

The enzyme catalyses yaequinolone E + dimethylallyl diphosphate + H2O = [(1'E)-3'-hydroxy-3',7'-dimethylocta-1',6'-dien-1'-yl]-quinolinone B + diphosphate. The protein operates within secondary metabolite biosynthesis. It functions in the pathway alkaloid biosynthesis. It participates in mycotoxin biosynthesis. Functionally, prenyltransferase; part of the gene cluster that mediates the biosynthesis of penigequinolones, potent insecticidal alkaloids that contain a highly modified 10-carbon prenyl group. The first stage is catalyzed by the nonribosomal peptide synthetase penN that condenses anthranilic acid and O-methyl-L-tyrosine to produce 4'-methoxycyclopeptin. 4'-methoxycyclopeptin is then converted to 4'-methoxydehydrocyclopeptin by the ketoglutarate-dependent dioxygenase penM through dehydrogenation to form a double bond between C-alpha and C-beta of the O-methyltyrosine side chain. PenM also converts its first product methoxydehydrocyclopeptin to 4'-methoxycyclopenin. The following conversion of 4'methoxycyclopenin into 4'-methoxyviridicatin is catalyzed by the cyclopenase penL. 4'-methoxyviridicatin is the precursor of quinolone natural products, and is further converted to quinolinone B. The prenyltransferase penI then catalyzes the canonical Friedel-Crafts alkylation of quinolinone B with dimethylallyl cation to yield dimethylallyl quinolone, which is subjected to FAD-dependent dehydrogenation by the FAD-linked oxidoreductase penH to yield conjugated aryl diene. The delta(3') double bond then serves as the site of the second alkylation with DMAPP catalyzed by the prenyltransferase penG to yield a carbenium ion intermediate, which can be attacked by H(2)O to yield a styrenyl quinolone containing a C3'-hydroxyprenyl chain, or undergo cyclization to yield yaequinolones J1 and J2. The conversion of the styrenyl quinolone into the tetrahydrofuran-containing yaequinolone C is performed by the FAD-dependent monooxygenase penE and involves epoxidation of the terminal C7'-C8' olefin, followed by epoxide ring opening initiated by the C3' hydroxyl group. The predicted cysteine hydrolase penJ acts as an epoxide hydrolase that enhances the rate of the 5-exo-tet cyclization step, increasing the yield of yaequinolone C. PenF catalyzes the cationic rearrangement of the epoxide formed by penE (before ring opening to produce yaequinolone C) into yaequinolone D. Finally, the short-chain dehydrogenase/reductase (SDR)-like reductase penD, catalyzes both the dehydration of yaequinolone D and the reduction of the resulting oxonium to yield penigequinolone. This is Prenyltransferase penG from Penicillium thymicola.